The primary structure comprises 988 residues: Ephrin type-B receptor 3 (988 aa).

Positions 1–24 (GVSSRARRPPGSSRSSRRGVTSEL) are disordered. Residues 1-534 (GVSSRARRPP…TSKTFQELPL (534 aa)) are Extracellular-facing. In terms of domain architecture, Eph LBD spans 11-189 (GSSRSSRRGV…FYKKCSNTIA (179 aa)). Residues C53 and C171 are joined by a disulfide bond. Fibronectin type-III domains lie at 311–424 (VPSA…TNQA) and 425–522 (APSA…TAED). 2 N-linked (GlcNAc...) asparagine glycosylation sites follow: N323 and N418. The helical transmembrane segment at 535 to 555 (IVGSATAGLLFVIVVVIIAIV) threads the bilayer. At 556 to 988 (CFRKGMVTEQ…QMNQTLPVQV (433 aa)) the chain is on the cytoplasmic side. Phosphotyrosine; by autocatalysis is present on Y604. The Protein kinase domain maps to 623 to 886 (VKIEEVIGAG…QIVNTLDKLI (264 aa)). ATP-binding positions include 629–637 (IGAGEFGEV) and K655. D748 acts as the Proton acceptor in catalysis. The SAM domain maps to 915-979 (TTFTTVGDWL…LSSIQDMRLQ (65 aa)). The short motif at 986 to 988 (VQV) is the PDZ-binding element.

It belongs to the protein kinase superfamily. Tyr protein kinase family. Ephrin receptor subfamily. Heterotetramer upon binding of the ligand. The heterotetramer is composed of an ephrin dimer and a receptor dimer. Oligomerization is probably required to induce biological responses. Post-translationally, phosphorylated. Autophosphorylates upon ligand-binding. Autophosphorylation on Tyr-604 is required for interaction with SH2 domain-containing proteins. As to expression, present in 10-day embryonic brain and body tissues. Prominent expression in kidney. Lower expression in lung, and barely detectable in brain, liver, heart, skeletal muscle and thymus.

The protein localises to the cell membrane. It localises to the cell projection. The protein resides in the dendrite. The catalysed reaction is L-tyrosyl-[protein] + ATP = O-phospho-L-tyrosyl-[protein] + ADP + H(+). Its function is as follows. Receptor tyrosine kinase which binds promiscuously transmembrane ephrin-B family ligands residing on adjacent cells, leading to contact-dependent bidirectional signaling into neighboring cells. The signaling pathway downstream of the receptor is referred to as forward signaling while the signaling pathway downstream of the ephrin ligand is referred to as reverse signaling. Generally has an overlapping and redundant function with EPHB2. Like EPHB2, functions in axon guidance during development. In addition to its role in axon guidance also plays an important redundant role with other ephrin-B receptors in development and maturation of dendritic spines and the formation of excitatory synapses. May control other aspects of development through regulation of cell migration and positioning. The protein is Ephrin type-B receptor 3 (EPHB3) of Gallus gallus (Chicken).